The primary structure comprises 476 residues: Glycogen synthase (476 aa).

K15 is an ADP-alpha-D-glucose binding site.

The protein belongs to the glycosyltransferase 1 family. Bacterial/plant glycogen synthase subfamily.

It carries out the reaction [(1-&gt;4)-alpha-D-glucosyl](n) + ADP-alpha-D-glucose = [(1-&gt;4)-alpha-D-glucosyl](n+1) + ADP + H(+). It participates in glycan biosynthesis; glycogen biosynthesis. In terms of biological role, synthesizes alpha-1,4-glucan chains using ADP-glucose. The chain is Glycogen synthase from Actinobacillus succinogenes (strain ATCC 55618 / DSM 22257 / CCUG 43843 / 130Z).